We begin with the raw amino-acid sequence, 650 residues long: Chaperone protein DnaK (650 aa).

Thr-200 carries the phosphothreonine; by autocatalysis modification.

The protein belongs to the heat shock protein 70 family.

Functionally, acts as a chaperone. This is Chaperone protein DnaK from Burkholderia orbicola (strain MC0-3).